The chain runs to 127 residues: Small ribosomal subunit protein bS6 (127 aa).

It belongs to the bacterial ribosomal protein bS6 family.

Functionally, binds together with bS18 to 16S ribosomal RNA. In Sulfurovum sp. (strain NBC37-1), this protein is Small ribosomal subunit protein bS6.